The chain runs to 158 residues: Pathogenesis-related protein 1 (158 aa).

Belongs to the BetVI family.

It localises to the cytoplasm. The sequence is that of Pathogenesis-related protein 1 (PR1) from Asparagus officinalis (Garden asparagus).